A 121-amino-acid polypeptide reads, in one-letter code: Cell division protein FtsB (121 aa).

Topologically, residues 1–6 are cytoplasmic; that stretch reads MRNWRW. Residues 7–24 traverse the membrane as a helical segment; the sequence is LLLVLAVLLAWLQYRFWF. The Periplasmic portion of the chain corresponds to 25 to 121; sequence GPGNSGEVMM…PEPVDPVDHP (97 aa). Residues 31–66 adopt a coiled-coil conformation; it reads EVMMLEAQVAHQTQDNEGLRQRNQALAAEVKDLKDG. Residues 98-121 form a disordered region; the sequence is APASAEASAPAQQAPEPVDPVDHP. Positions 99 to 113 are enriched in low complexity; that stretch reads PASAEASAPAQQAPE.

Belongs to the FtsB family. In terms of assembly, part of a complex composed of FtsB, FtsL and FtsQ.

It is found in the cell inner membrane. Essential cell division protein. May link together the upstream cell division proteins, which are predominantly cytoplasmic, with the downstream cell division proteins, which are predominantly periplasmic. This is Cell division protein FtsB from Xanthomonas axonopodis pv. citri (strain 306).